A 199-amino-acid chain; its full sequence is Cell division protein SepF (199 aa).

The segment at 15–79 is disordered; that stretch reads TEDGDETEVQ…PQPQQKSSTE (65 aa).

The protein belongs to the SepF family. In terms of assembly, homodimer. Interacts with FtsZ.

The protein localises to the cytoplasm. Functionally, cell division protein that is part of the divisome complex and is recruited early to the Z-ring. Probably stimulates Z-ring formation, perhaps through the cross-linking of FtsZ protofilaments. Its function overlaps with FtsA. This chain is Cell division protein SepF, found in Streptococcus sanguinis (strain SK36).